Here is a 72-residue protein sequence, read N- to C-terminus: Translation initiation factor IF-1 2 (72 aa).

Positions 1 to 72 (MAKEDVIEMQ…TKGRIVFRTK (72 aa)) constitute an S1-like domain.

It belongs to the IF-1 family. In terms of assembly, component of the 30S ribosomal translation pre-initiation complex which assembles on the 30S ribosome in the order IF-2 and IF-3, IF-1 and N-formylmethionyl-tRNA(fMet); mRNA recruitment can occur at any time during PIC assembly.

Its subcellular location is the cytoplasm. One of the essential components for the initiation of protein synthesis. Stabilizes the binding of IF-2 and IF-3 on the 30S subunit to which N-formylmethionyl-tRNA(fMet) subsequently binds. Helps modulate mRNA selection, yielding the 30S pre-initiation complex (PIC). Upon addition of the 50S ribosomal subunit IF-1, IF-2 and IF-3 are released leaving the mature 70S translation initiation complex. The polypeptide is Translation initiation factor IF-1 2 (Azoarcus sp. (strain BH72)).